The chain runs to 172 residues: Myosin regulatory light chain 2, smooth muscle major isoform (172 aa).

The span at 1–16 shows a compositional bias: basic residues; sequence MSSKRAKAKTTKKRPQ. The segment at 1-20 is disordered; it reads MSSKRAKAKTTKKRPQRATS. At Ser-2 the chain carries N-acetylserine. EF-hand domains follow at residues 29–64, 98–133, and 134–169; these read SQIQEFKEAFNMIDQNRDGFIDKEDLHDMLASMGKN, DPEDVIRNAFACFDEEASGFIHEDHLRELLTTMGDR, and FTDEEVDEMYREAPIDKKGNFNYVEFTRILKHGAKD. The Ca(2+) site is built by Asp-42, Asn-44, Asp-46, and Asp-53.

As to quaternary structure, myosin is a hexamer of 2 heavy chains and 4 light chains.

Myosin regulatory subunit that plays an important role in regulation of both smooth muscle and nonmuscle cell contractile activity. Implicated in cytokinesis, receptor capping, and cell locomotion. The chain is Myosin regulatory light chain 2, smooth muscle major isoform from Gallus gallus (Chicken).